The primary structure comprises 328 residues: Malate dehydrogenase (328 aa).

12-18 (GAAGQIG) is an NAD(+) binding site. Residues Arg95 and Arg101 each contribute to the substrate site. Residues Asn108, Gln115, and 132 to 134 (VGN) each bind NAD(+). Residues Asn134 and Arg165 each contribute to the substrate site. Residue His190 is the Proton acceptor of the active site.

The protein belongs to the LDH/MDH superfamily. MDH type 2 family.

The enzyme catalyses (S)-malate + NAD(+) = oxaloacetate + NADH + H(+). Functionally, catalyzes the reversible oxidation of malate to oxaloacetate. The polypeptide is Malate dehydrogenase (Paracidovorax citrulli (strain AAC00-1) (Acidovorax citrulli)).